The primary structure comprises 276 residues: Bifunctional esterase/perhydrolase DCH (276 aa).

Positions 23-254 (PVIFFHHGWP…NGKLISYPGF (232 aa)) constitute an AB hydrolase-1 domain. Catalysis depends on residues Ser97, Asp227, and His256.

It belongs to the AB hydrolase superfamily. Bacterial non-heme haloperoxidase / perhydrolase family. In terms of assembly, homodimer.

It catalyses the reaction 3,4-dihydrocoumarin + H2O = 3-(2-hydroxyphenyl)propanoate + H(+). The catalysed reaction is peracetic acid + H2O = acetate + H2O2 + H(+). The enzyme catalyses a percarboxylic acid + H2O = a carboxylate + H2O2 + H(+). Inhibited by the serine protease inhibitors diisopropyl fluorophosphate and phenylmethanesulfonyl fluoride. Multifunctional enzyme, which shows esterase and perhydrolase activities, and is capable of organic acid-assisted bromination of organic compounds. Catalyzes the hydrolysis of 3,4-dihydrocoumarin. Aromatic lactones other than 3,4-dihydrocoumarin, such as 2-coumaranone and homogentisic acid lactone, are also substrates, but their activities relative to that of 3,4-dihydrocoumarin are quite low. Also catalyzes the hydrolysis of several linear esters, with specificity toward methyl esters. In addition, shows perhydrolase activity and catalyzes the dose- and time-dependent degradation of peracetic acid, a broad-spectrum biocide, to acetic acid and hydrogen peroxide. It suggests that in vivo DCH may play a role in the oxidative stress defense system and detoxify peroxoacids in conjunction with the catalase, i.e. peroxoacids are first hydrolyzed to the corresponding acids and hydrogen peroxide by DCH, and then the resulting hydrogen peroxide is degraded by the catalase. Also shows organic acid-assisted bromination activity toward monochlorodimedon when incubated with hydrogen peroxide and dihydrocoumarin or an organic acid, such as acetate and n-butyrate. This is Bifunctional esterase/perhydrolase DCH from Acinetobacter calcoaceticus.